A 126-amino-acid polypeptide reads, in one-letter code: Small ribosomal subunit protein uS13 (126 aa).

The tract at residues 92 to 126 is disordered; the sequence is RMGLPVRGQRTRTNARTRRGGRRTVAGKKKAPAKK. Residues 100 to 126 show a composition bias toward basic residues; that stretch reads QRTRTNARTRRGGRRTVAGKKKAPAKK.

It belongs to the universal ribosomal protein uS13 family. Part of the 30S ribosomal subunit. Forms a loose heterodimer with protein S19. Forms two bridges to the 50S subunit in the 70S ribosome.

Its function is as follows. Located at the top of the head of the 30S subunit, it contacts several helices of the 16S rRNA. In the 70S ribosome it contacts the 23S rRNA (bridge B1a) and protein L5 of the 50S subunit (bridge B1b), connecting the 2 subunits; these bridges are implicated in subunit movement. Contacts the tRNAs in the A and P-sites. In Cyanothece sp. (strain PCC 7425 / ATCC 29141), this protein is Small ribosomal subunit protein uS13.